Here is a 438-residue protein sequence, read N- to C-terminus: Coenzyme A disulfide reductase (438 aa).

An FAD-binding site is contributed by 8 to 33; sequence GAVAGGATCASQIRRLDKESDIIIFE. 5 residues coordinate substrate: Thr15, Gln19, Arg22, Ser39, and Asn42. Residue Cys43 is the Nucleophile of the active site. Cys43 (redox-active) is an active-site residue. Lys71 contacts substrate. Position 151-166 (151-166) interacts with NADP(+); sequence VLVVGAGYVSLEVLEN. 267 to 277 contacts FAD; sequence TNVPNIYAIGD. Position 299 (His299) interacts with substrate. An FAD-binding site is contributed by Tyr419. Residue Lys427 participates in substrate binding.

It belongs to the class-III pyridine nucleotide-disulfide oxidoreductase family. Homodimer. FAD is required as a cofactor.

It carries out the reaction NADP(+) + 2 CoA = CoA-disulfide + NADPH + H(+). In terms of biological role, catalyzes specifically the NADPH-dependent reduction of coenzyme A disulfide. The protein is Coenzyme A disulfide reductase of Staphylococcus aureus (strain bovine RF122 / ET3-1).